The primary structure comprises 380 residues: Cytosolic acyl coenzyme A thioester hydrolase (380 aa).

In terms of domain architecture, HotDog ACOT-type 1 spans 50–168; it reads PCGACITGRI…TLWYVPLSLK (119 aa). Asn-66 is a catalytic residue. N6-acetyllysine is present on residues Lys-168 and Lys-198. Residues 224-338 form the HotDog ACOT-type 2 domain; sequence SYSQSSLIHL…FFTYVSLSQE (115 aa). The active site involves Asp-255. Lys-283 bears the N6-acetyllysine mark. A disordered region spans residues 350–380; that stretch reads ETEDEKKRFEEGKGRYLQMKAKRQGHAEPQP. A compositionally biased stretch (basic and acidic residues) spans 353–363; that stretch reads DEKKRFEEGKG.

In terms of assembly, homohexamer. As to expression, isoform 4 is expressed exclusively in brain.

Its subcellular location is the cytoplasm. The protein localises to the cytosol. It localises to the mitochondrion. It carries out the reaction hexadecanoyl-CoA + H2O = hexadecanoate + CoA + H(+). It catalyses the reaction octanoyl-CoA + H2O = octanoate + CoA + H(+). The enzyme catalyses dodecanoyl-CoA + H2O = dodecanoate + CoA + H(+). The catalysed reaction is (9Z)-octadecenoyl-CoA + H2O = (9Z)-octadecenoate + CoA + H(+). It carries out the reaction tetradecanoyl-CoA + H2O = tetradecanoate + CoA + H(+). It catalyses the reaction decanoyl-CoA + H2O = decanoate + CoA + H(+). The enzyme catalyses octadecanoyl-CoA + H2O = octadecanoate + CoA + H(+). It functions in the pathway lipid metabolism; fatty acid metabolism. Functionally, catalyzes the hydrolysis of acyl-CoAs into free fatty acids and coenzyme A (CoASH), regulating their respective intracellular levels. Preferentially hydrolyzes palmitoyl-CoA, but has a broad specificity acting on other fatty acyl-CoAs with chain-lengths of C8-C18. May play an important physiological function in brain. This is Cytosolic acyl coenzyme A thioester hydrolase (ACOT7) from Homo sapiens (Human).